We begin with the raw amino-acid sequence, 113 residues long: uncharacterized protein (113 aa).

A disordered region spans residues 66-85; it reads WSTPTTSSNTQNTQSSSDSY. Positions 67-85 are enriched in low complexity; sequence STPTTSSNTQNTQSSSDSY.

This is an uncharacterized protein from Escherichia coli (Bacteriophage T4).